The sequence spans 140 residues: Large ribosomal subunit protein uL22 (140 aa).

This sequence belongs to the universal ribosomal protein uL22 family. Part of the 50S ribosomal subunit.

This protein binds specifically to 23S rRNA; its binding is stimulated by other ribosomal proteins, e.g. L4, L17, and L20. It is important during the early stages of 50S assembly. It makes multiple contacts with different domains of the 23S rRNA in the assembled 50S subunit and ribosome. Functionally, the globular domain of the protein is located near the polypeptide exit tunnel on the outside of the subunit, while an extended beta-hairpin is found that lines the wall of the exit tunnel in the center of the 70S ribosome. This is Large ribosomal subunit protein uL22 from Parafrankia sp. (strain EAN1pec).